Reading from the N-terminus, the 493-residue chain is Cyclin-dependent kinase-like 2 (493 aa).

Residues 4–287 form the Protein kinase domain; sequence YENLGLVGEG…CAELLHHDFF (284 aa). ATP-binding positions include 10–18 and Lys33; that span reads VGEGSYGMV. Positions 45-51 match the [NKR]KIAxRE motif; sequence KKIAMRE. The Proton acceptor role is filled by Asp126. The segment at 363–384 is disordered; the sequence is GEKAEKGNRASNASCLHDSRTS.

It belongs to the protein kinase superfamily. CMGC Ser/Thr protein kinase family. CDC2/CDKX subfamily. As to expression, expressed in testis and kidney, and at lower level in brain and lung.

It localises to the cytoplasm. Its subcellular location is the nucleus. It catalyses the reaction L-seryl-[protein] + ATP = O-phospho-L-seryl-[protein] + ADP + H(+). It carries out the reaction L-threonyl-[protein] + ATP = O-phospho-L-threonyl-[protein] + ADP + H(+). This chain is Cyclin-dependent kinase-like 2, found in Homo sapiens (Human).